Reading from the N-terminus, the 147-residue chain is Peptide methionine sulfoxide reductase MsrB (147 aa).

The MsrB domain occupies 8-131; it reads KEELKKVLTE…NSASLKFIPK (124 aa). C120 (nucleophile) is an active-site residue.

This sequence belongs to the MsrB Met sulfoxide reductase family.

The catalysed reaction is L-methionyl-[protein] + [thioredoxin]-disulfide + H2O = L-methionyl-(R)-S-oxide-[protein] + [thioredoxin]-dithiol. The protein is Peptide methionine sulfoxide reductase MsrB of Clostridium perfringens (strain ATCC 13124 / DSM 756 / JCM 1290 / NCIMB 6125 / NCTC 8237 / Type A).